We begin with the raw amino-acid sequence, 139 residues long: Protein archease (139 aa).

Ca(2+) contacts are provided by Asp-12, Asp-138, and Ile-139.

Belongs to the archease family.

In terms of biological role, activates the tRNA-splicing ligase complex by facilitating the enzymatic turnover of catalytic subunit RtcB. Acts by promoting the guanylylation of RtcB, a key intermediate step in tRNA ligation. Can also alter the NTP specificity of RtcB such that ATP, dGTP or ITP is used efficiently. In Sulfolobus acidocaldarius (strain ATCC 33909 / DSM 639 / JCM 8929 / NBRC 15157 / NCIMB 11770), this protein is Protein archease.